Here is a 431-residue protein sequence, read N- to C-terminus: 3-phosphoshikimate 1-carboxyvinyltransferase (431 aa).

Residues Lys-22, Ser-23, and Arg-27 each contribute to the 3-phosphoshikimate site. Lys-22 is a phosphoenolpyruvate binding site. Phosphoenolpyruvate contacts are provided by Gly-94 and Arg-122. The 3-phosphoshikimate site is built by Ser-167, Gln-169, Asp-314, and Lys-341. Residue Gln-169 coordinates phosphoenolpyruvate. The active-site Proton acceptor is the Asp-314. Arg-345 and Arg-391 together coordinate phosphoenolpyruvate.

Belongs to the EPSP synthase family. As to quaternary structure, monomer.

The protein resides in the cytoplasm. It catalyses the reaction 3-phosphoshikimate + phosphoenolpyruvate = 5-O-(1-carboxyvinyl)-3-phosphoshikimate + phosphate. It participates in metabolic intermediate biosynthesis; chorismate biosynthesis; chorismate from D-erythrose 4-phosphate and phosphoenolpyruvate: step 6/7. Its function is as follows. Catalyzes the transfer of the enolpyruvyl moiety of phosphoenolpyruvate (PEP) to the 5-hydroxyl of shikimate-3-phosphate (S3P) to produce enolpyruvyl shikimate-3-phosphate and inorganic phosphate. The protein is 3-phosphoshikimate 1-carboxyvinyltransferase of Leuconostoc citreum (strain KM20).